A 306-amino-acid chain; its full sequence is Protein-methionine-sulfoxide reductase catalytic subunit MsrP (306 aa).

A signal peptide (tat-type signal) is located at residues Met1–Ala45. Mo-molybdopterin is bound by residues Asn69, Tyr72–Glu73, Cys127, Thr162, Asn210, Arg215, and Gly226–Lys228.

Belongs to the MsrP family. Heterodimer of a catalytic subunit (MsrP) and a heme-binding subunit (MsrQ). Mo-molybdopterin is required as a cofactor. Post-translationally, predicted to be exported by the Tat system. The position of the signal peptide cleavage has not been experimentally proven.

The protein localises to the periplasm. The enzyme catalyses L-methionyl-[protein] + a quinone + H2O = L-methionyl-(S)-S-oxide-[protein] + a quinol. It catalyses the reaction L-methionyl-[protein] + a quinone + H2O = L-methionyl-(R)-S-oxide-[protein] + a quinol. Part of the MsrPQ system that repairs oxidized periplasmic proteins containing methionine sulfoxide residues (Met-O), using respiratory chain electrons. Thus protects these proteins from oxidative-stress damage caused by reactive species of oxygen and chlorine generated by the host defense mechanisms. MsrPQ is essential for the maintenance of envelope integrity under bleach stress, rescuing a wide series of structurally unrelated periplasmic proteins from methionine oxidation. The catalytic subunit MsrP is non-stereospecific, being able to reduce both (R-) and (S-) diastereoisomers of methionine sulfoxide. The chain is Protein-methionine-sulfoxide reductase catalytic subunit MsrP from Caulobacter vibrioides (strain ATCC 19089 / CIP 103742 / CB 15) (Caulobacter crescentus).